We begin with the raw amino-acid sequence, 201 residues long: Putative toxin HigB2 (201 aa).

This sequence belongs to the mycobacterial HigB family.

In terms of biological role, putative toxic component of a type II toxin-antitoxin (TA) system. Its cognate antitoxin would be HigA2. The sequence is that of Putative toxin HigB2 from Mycobacterium tuberculosis (strain ATCC 25618 / H37Rv).